The sequence spans 513 residues: Activin receptor type-2A (513 aa).

A signal peptide spans Met-1–Gly-19. Residues Ala-20 to Pro-135 lie on the Extracellular side of the membrane. 5 disulfides stabilise this stretch: Cys-30–Cys-60, Cys-50–Cys-78, Cys-85–Cys-104, Cys-91–Cys-103, and Cys-105–Cys-110. Asn-43 and Asn-66 each carry an N-linked (GlcNAc...) asparagine glycan. Residues Tyr-136–Tyr-161 form a helical membrane-spanning segment. The Cytoplasmic portion of the chain corresponds to Arg-162–Leu-513. Positions Leu-192 to Leu-485 constitute a Protein kinase domain. ATP-binding positions include Lys-198–Val-206 and Lys-219. The active-site Proton acceptor is the Asp-322.

The protein belongs to the protein kinase superfamily. TKL Ser/Thr protein kinase family. TGFB receptor subfamily. In terms of assembly, part of a complex consisting of MAGI2/ARIP1, ACVR2A, ACVR1B and SMAD3. Interacts with MAGI2/ARIP1. Interacts with type I receptor ACVR1. Interacts with BMP7. Interacts with TSC22D1/TSC-22. Interacts with activin A/INHBA. It depends on Mg(2+) as a cofactor. The cofactor is Mn(2+).

Its subcellular location is the cell membrane. It carries out the reaction L-threonyl-[receptor-protein] + ATP = O-phospho-L-threonyl-[receptor-protein] + ADP + H(+). It catalyses the reaction L-seryl-[receptor-protein] + ATP = O-phospho-L-seryl-[receptor-protein] + ADP + H(+). In terms of biological role, on ligand binding, forms a receptor complex consisting of two type II and two type I transmembrane serine/threonine kinases. Type II receptors phosphorylate and activate type I receptors which autophosphorylate, then bind and activate SMAD transcriptional regulators. Receptor for activin A, activin B and inhibin A. Mediates induction of adipogenesis by GDF6. The protein is Activin receptor type-2A (ACVR2A) of Bos taurus (Bovine).